A 342-amino-acid chain; its full sequence is Nicotinate-nucleotide--dimethylbenzimidazole phosphoribosyltransferase (342 aa).

The active-site Proton acceptor is E311.

Belongs to the CobT family.

It catalyses the reaction 5,6-dimethylbenzimidazole + nicotinate beta-D-ribonucleotide = alpha-ribazole 5'-phosphate + nicotinate + H(+). It participates in nucleoside biosynthesis; alpha-ribazole biosynthesis; alpha-ribazole from 5,6-dimethylbenzimidazole: step 1/2. Catalyzes the synthesis of alpha-ribazole-5'-phosphate from nicotinate mononucleotide (NAMN) and 5,6-dimethylbenzimidazole (DMB). The chain is Nicotinate-nucleotide--dimethylbenzimidazole phosphoribosyltransferase from Shewanella sediminis (strain HAW-EB3).